The following is a 514-amino-acid chain: HTH-type transcriptional regulatory protein TyrR (514 aa).

An ACT domain is found at 2 to 72 (RLEVFCEDRL…GVTDVRTVPW (71 aa)). The 43-residue stretch at 78–120 (EHLALSALLEALPEPVLSLDMKSKIEMANPASCQLFAHTQDRM) folds into the PAS domain. The Sigma-54 factor interaction domain maps to 206–428 (IIAVSAKMKH…VKNAIYRALT (223 aa)). ATP-binding positions include 234-241 (GNTGTGKD) and 290-299 (ANGGSVLLDE). The segment at residues 482–502 (STRKLAKRLGVSHTAIANKLR) is a DNA-binding region (H-T-H motif).

Homodimer. In presence of tyrosine (or high concentrations of phenylalanine or tryptophan) and ATP, it self-associates to form an hexamer.

The protein localises to the cytoplasm. Its function is as follows. Dual transcriptional regulator of the TyrR regulon, which includes a number of genes coding for proteins involved in the biosynthesis or transport of the three aromatic amino acids, phenylalanine, tyrosine and tryptophan. These three aromatic amino acids act as effectors which bind to the TyrR protein to form an active regulatory protein. Acts by binding specifically to TyrR boxes in the promoter region of the target genes. This is HTH-type transcriptional regulatory protein TyrR from Citrobacter braakii.